We begin with the raw amino-acid sequence, 126 residues long: Protein LiaI (126 aa).

Transmembrane regions (helical) follow at residues phenylalanine 11–isoleucine 31 and isoleucine 56–isoleucine 76.

The protein localises to the cell membrane. The sequence is that of Protein LiaI (liaI) from Bacillus subtilis (strain 168).